We begin with the raw amino-acid sequence, 152 residues long: Superoxide dismutase [Cu-Zn] (152 aa).

His-45, His-47, and His-62 together coordinate Cu cation. Cys-56 and Cys-145 are disulfide-bonded. 4 residues coordinate Zn(2+): His-62, His-70, His-79, and Asp-82. His-119 provides a ligand contact to Cu cation.

It belongs to the Cu-Zn superoxide dismutase family. As to quaternary structure, homodimer. The cofactor is Cu cation. It depends on Zn(2+) as a cofactor.

The protein localises to the cytoplasm. It catalyses the reaction 2 superoxide + 2 H(+) = H2O2 + O2. Functionally, destroys radicals which are normally produced within the cells and which are toxic to biological systems. In Nicotiana plumbaginifolia (Leadwort-leaved tobacco), this protein is Superoxide dismutase [Cu-Zn] (SODCC).